The following is a 331-amino-acid chain: Histone-lysine N-methyltransferase, H3 lysine-9 specific dim-5 (331 aa).

The Pre-SET domain occupies 77–159; it reads VGCSCASDEE…DCPNRVVERG (83 aa). Residues Cys-79, Cys-81, Cys-87, Cys-92, Cys-94, Cys-141, Cys-145, Cys-147, and Cys-151 each coordinate Zn(2+). Positions 162–297 constitute an SET domain; the sequence is VPLQIFRTKD…KGTELTFDYV (136 aa). Residues 172 to 174, Asp-215, Tyr-217, Arg-251, and 254 to 255 contribute to the S-adenosyl-L-methionine site; these read RGW and NH. 4 residues coordinate Zn(2+): Cys-257, Cys-319, Cys-321, and Cys-326. Residues 315-331 form the Post-SET domain; sequence EMTKCLCGTAKCRGYLW.

Belongs to the class V-like SAM-binding methyltransferase superfamily. Histone-lysine methyltransferase family. Suvar3-9 subfamily.

It localises to the nucleus. It is found in the chromosome. It carries out the reaction L-lysyl(9)-[histone H3] + 3 S-adenosyl-L-methionine = N(6),N(6),N(6)-trimethyl-L-lysyl(9)-[histone H3] + 3 S-adenosyl-L-homocysteine + 3 H(+). Functionally, histone methyltransferase that specifically trimethylates histone H3 to form H3K9me3. H3K9me3 marks chromatin regions for DNA methylation. Dim-5 recognizes Arg-8 to Gly-12 of the H3 tail with Thr-11 and Gly-12 being the most important specificity determinants, the recognition of whcih is important to distinguish H3K9 from H3K27 and H4K20. This chain is Histone-lysine N-methyltransferase, H3 lysine-9 specific dim-5 (dim-5), found in Neurospora crassa (strain ATCC 24698 / 74-OR23-1A / CBS 708.71 / DSM 1257 / FGSC 987).